Consider the following 138-residue polypeptide: Small ribosomal subunit protein uS11c (138 aa).

The interval 1–22 is disordered; sequence MAKAIPKISSRRNGRIGSRKGA. Residues 9–22 show a composition bias toward basic residues; the sequence is SSRRNGRIGSRKGA.

This sequence belongs to the universal ribosomal protein uS11 family. Part of the 30S ribosomal subunit.

The protein localises to the plastid. It localises to the chloroplast. This is Small ribosomal subunit protein uS11c from Nicotiana tabacum (Common tobacco).